Consider the following 284-residue polypeptide: Genome polyprotein (284 aa).

Disordered regions lie at residues 16–57 and 255–284; these read HQAN…GTSG and GIST…GKNM. The span at 35 to 44 shows a compositional bias: polar residues; it reads EQSSIQSNLS.

Belongs to the potyviridae genome polyprotein family. In terms of processing, genome polyprotein of potyviruses undergoes post-translational proteolytic processing by the main proteinase NIa-pro resulting in the production of at least ten individual proteins. The P1 proteinase and the HC-pro cleave only their respective C-termini autocatalytically. 6K1 is essential for proper proteolytic separation of P3 from CI.

It is found in the virion. It carries out the reaction RNA(n) + a ribonucleoside 5'-triphosphate = RNA(n+1) + diphosphate. An RNA-dependent RNA polymerase that plays an essential role in the virus replication. Its function is as follows. Involved in aphid transmission, cell-to-cell and systemis movement, encapsidation of the viral RNA and in the regulation of viral RNA amplification. The protein is Genome polyprotein of Capsicum (peppers).